Reading from the N-terminus, the 1079-residue chain is DNA ligase 4 (1079 aa).

Residues Met1–Gln20 are disordered. Glu295, Lys297, Leu298, Arg302, Glu357, Phe395, Glu460, Lys465, Lys482, and Lys484 together coordinate ATP. Residue Lys297 is the N6-AMP-lysine intermediate of the active site. Residue Glu357 participates in Mg(2+) binding. Glu460 lines the Mg(2+) pocket. A BRCT 1 domain is found at Val699–Leu789. Positions Asp838–Val847 are enriched in acidic residues. Residues Asp838 to Tyr942 form a disordered region. 2 stretches are compositionally biased toward basic and acidic residues: residues Glu848–Gln878 and Met900–Arg914. Residues Asp968 to Pro1078 enclose the BRCT 2 domain.

Belongs to the ATP-dependent DNA ligase family. The cofactor is Mg(2+).

It is found in the nucleus. The catalysed reaction is ATP + (deoxyribonucleotide)n-3'-hydroxyl + 5'-phospho-(deoxyribonucleotide)m = (deoxyribonucleotide)n+m + AMP + diphosphate.. In terms of biological role, DNA ligase involved in DNA non-homologous end joining (NHEJ); required for double-strand break (DSB) repair. This chain is DNA ligase 4 (LIG4), found in Cryptococcus neoformans var. neoformans serotype D (strain JEC21 / ATCC MYA-565) (Filobasidiella neoformans).